We begin with the raw amino-acid sequence, 78 residues long: Dermaseptin-B1 (78 aa).

The first 22 residues, 1-22, serve as a signal peptide directing secretion; sequence MDILKKSLFLVLFLGLVSLSIC. The propeptide occupies 23–42; the sequence is EEEKRENEDEEKQDDEQSEM. The residue at position 75 (Gln-75) is a Glutamine amide. The propeptide occupies 76 to 78; that stretch reads GEQ.

Belongs to the frog skin active peptide (FSAP) family. Dermaseptin subfamily. In terms of tissue distribution, expressed by the skin glands.

Its subcellular location is the secreted. Its function is as follows. Possesses a potent antimicrobial activity against bacteria, fungi and protozoa. Probably acts by disturbing membrane functions with its amphipathic structure. The chain is Dermaseptin-B1 from Phyllomedusa bicolor (Two-colored leaf frog).